A 476-amino-acid chain; its full sequence is Tubulointerstitial nephritis antigen (476 aa).

Asparagine 38 is a glycosylation site (N-linked (GlcNAc...) asparagine). The 49-residue stretch at 59–107 folds into the SMB domain; that stretch reads RFGCCADRDDGCVTQFYEADALCYCDKFCERENSDCCPDYKSFCREEKG. Disulfide bonds link cysteine 63/cysteine 83 and cysteine 87/cysteine 94. Residues asparagine 175, asparagine 314, asparagine 360, and asparagine 455 are each glycosylated (N-linked (GlcNAc...) asparagine).

The protein belongs to the peptidase C1 family.

It localises to the secreted. The protein resides in the extracellular space. It is found in the extracellular matrix. Its subcellular location is the basement membrane. In terms of biological role, mediates adhesion of proximal tubule epithelial cells via integrins alpha3-beta1 and alphaV-beta3. This is a non catalytic peptidase C1 family protein. This Bos taurus (Bovine) protein is Tubulointerstitial nephritis antigen (TINAG).